Reading from the N-terminus, the 342-residue chain is Ferredoxin--NADP reductase (342 aa).

Residues cysteine 17, aspartate 36, glutamine 44, tyrosine 49, isoleucine 89, phenylalanine 124, aspartate 289, and threonine 330 each coordinate FAD.

The protein belongs to the ferredoxin--NADP reductase type 2 family. In terms of assembly, homodimer. FAD is required as a cofactor.

It catalyses the reaction 2 reduced [2Fe-2S]-[ferredoxin] + NADP(+) + H(+) = 2 oxidized [2Fe-2S]-[ferredoxin] + NADPH. The sequence is that of Ferredoxin--NADP reductase from Rhodopseudomonas palustris (strain BisB5).